We begin with the raw amino-acid sequence, 287 residues long: Bifunctional protein FolD (287 aa).

NADP(+) contacts are provided by residues 166–168 (GAS) and Ile232.

Belongs to the tetrahydrofolate dehydrogenase/cyclohydrolase family. Homodimer.

The catalysed reaction is (6R)-5,10-methylene-5,6,7,8-tetrahydrofolate + NADP(+) = (6R)-5,10-methenyltetrahydrofolate + NADPH. It carries out the reaction (6R)-5,10-methenyltetrahydrofolate + H2O = (6R)-10-formyltetrahydrofolate + H(+). The protein operates within one-carbon metabolism; tetrahydrofolate interconversion. Functionally, catalyzes the oxidation of 5,10-methylenetetrahydrofolate to 5,10-methenyltetrahydrofolate and then the hydrolysis of 5,10-methenyltetrahydrofolate to 10-formyltetrahydrofolate. The sequence is that of Bifunctional protein FolD from Aeromonas salmonicida (strain A449).